A 345-amino-acid chain; its full sequence is Protein RecA (345 aa).

Position 65–72 (65–72) interacts with ATP; that stretch reads GPESSGKT.

It belongs to the RecA family.

It localises to the cytoplasm. Can catalyze the hydrolysis of ATP in the presence of single-stranded DNA, the ATP-dependent uptake of single-stranded DNA by duplex DNA, and the ATP-dependent hybridization of homologous single-stranded DNAs. It interacts with LexA causing its activation and leading to its autocatalytic cleavage. The sequence is that of Protein RecA from Sulfurimonas denitrificans (strain ATCC 33889 / DSM 1251) (Thiomicrospira denitrificans (strain ATCC 33889 / DSM 1251)).